Reading from the N-terminus, the 253-residue chain is uncharacterized protein (253 aa).

An N-terminal signal peptide occupies residues 1–19 (MRYLKRITIYISLLILVSG). Residue Cys20 is the site of N-palmitoyl cysteine attachment. Cys20 carries the S-diacylglycerol cysteine lipid modification.

The protein belongs to the staphylococcal tandem lipoprotein family.

It localises to the cell membrane. This is an uncharacterized protein from Staphylococcus epidermidis (strain ATCC 12228 / FDA PCI 1200).